The following is a 540-amino-acid chain: MGPGERAGGGGDAGKGNAAGGGGGGRSATTAGSRAVSALCLLLSVGSAAACLLLGVQAAALQGRVAALEEERELLRRAGPPGALDAWAEPHLERLLREKLDGLAKIRTAREAPSECVCPPGPPGRRGKPGRRGDPGPPGQSGRDGYPGPLGLDGKPGLPGPKGEKGAPGDFGPRGDQGQDGAAGPPGPPGPPGARGPPGDTGKDGPRGAQGPAGPKGEPGQDGEMGPKGPPGPKGEPGVPGKKGDDGTPSQPGPPGPKGEPGSMGPRGENGVDGAPGPKGEPGHRGTDGAAGPRGAPGLKGEQGDTVVIDYDGRILDALKGPPGPQGPPGPPGIPGAKGELGLPGAPGIDGEKGPKGQKGDPGEPGPAGLKGEAGEMGLSGLPGADGLKGEKGESASDSLQESLAQLIVEPGPPGPPGPPGPMGLQGIQGPKGLDGAKGEKGASGERGPSGLPGPVGPPGLIGLPGTKGEKGRPGEPGLDGFPGPRGEKGDRSERGEKGERGVPGRKGVKGQKGEPGPPGLDQPCPVGPDGLPVPGCWHK.

Residues 1-26 (MGPGERAGGGGDAGKGNAAGGGGGGR) show a composition bias toward gly residues. The disordered stretch occupies residues 1 to 28 (MGPGERAGGGGDAGKGNAAGGGGGGRSA). Residues 1 to 34 (MGPGERAGGGGDAGKGNAAGGGGGGRSATTAGSR) are Cytoplasmic-facing. A helical; Signal-anchor for type II membrane protein membrane pass occupies residues 35–56 (AVSALCLLLSVGSAAACLLLGV). Over 57–540 (QAAALQGRVA…GLPVPGCWHK (484 aa)) the chain is Extracellular. Disordered stretches follow at residues 109–304 (AREA…GEQG) and 316–540 (LDAL…CWHK). 5 Collagen-like domains span residues 124-243 (GRRG…PGKK), 251-305 (QPGP…EQGD), 321-380 (GPPG…MGLS), 412-460 (GPPG…GPPG), and 463-522 (GLPG…PGLD). Low complexity-rich tracts occupy residues 140-156 (QSGR…DGKP) and 168-183 (PGDF…DGAA). Residues 185 to 195 (PPGPPGPPGAR) show a composition bias toward pro residues. Residues 322–334 (PPGPQGPPGPPGI) are compositionally biased toward pro residues. Over residues 350–362 (DGEKGPKGQKGDP) the composition is skewed to basic and acidic residues. Over residues 411 to 422 (PGPPGPPGPPGP) the composition is skewed to pro residues. 2 stretches are compositionally biased toward basic and acidic residues: residues 435-444 (DGAKGEKGAS) and 486-503 (RGEK…ERGV).

As to quaternary structure, homotrimer. In terms of processing, undergoes proteolytic cleavage by furin protease to yield a 60 kDa soluble form that forms a homotrimer and exhibits a low affinity interaction with heparin.

It localises to the cell membrane. The protein is Collagen alpha-1(XXIII) chain (COL23A1) of Homo sapiens (Human).